A 765-amino-acid chain; its full sequence is Protein BCH2 (765 aa).

Positions Met-1–Arg-31 are disordered. The segment at Leu-735 to Asp-765 is CHS5-binding.

It belongs to the CHAPS family. In terms of assembly, component of the CHS5/6 complex composed of the 4 CHAPS proteins BCH1, BCH2, BUD7, and CHS6 as well as at least CHS5 and GTP-bound ARF1. The complex interacts with the cargo protein CHS3.

It localises to the golgi apparatus. It is found in the trans-Golgi network membrane. Functionally, member of the CHS5-ARF1P-binding proteins (CHAPS) which mediates export of specific cargo proteins, including chitin synthase CHS3. The chain is Protein BCH2 (BCH2) from Saccharomyces cerevisiae (strain ATCC 204508 / S288c) (Baker's yeast).